Consider the following 346-residue polypeptide: Histidinol-phosphate aminotransferase (346 aa).

An N6-(pyridoxal phosphate)lysine modification is found at lysine 209.

It belongs to the class-II pyridoxal-phosphate-dependent aminotransferase family. Histidinol-phosphate aminotransferase subfamily. In terms of assembly, homodimer. Pyridoxal 5'-phosphate is required as a cofactor.

The catalysed reaction is L-histidinol phosphate + 2-oxoglutarate = 3-(imidazol-4-yl)-2-oxopropyl phosphate + L-glutamate. The protein operates within amino-acid biosynthesis; L-histidine biosynthesis; L-histidine from 5-phospho-alpha-D-ribose 1-diphosphate: step 7/9. This is Histidinol-phosphate aminotransferase from Vibrio parahaemolyticus serotype O3:K6 (strain RIMD 2210633).